Reading from the N-terminus, the 635-residue chain is ATP-dependent zinc metalloprotease FtsH (635 aa).

Residues M1–N4 are Cytoplasmic-facing. The chain crosses the membrane as a helical span at residues L5 to S25. At S26 to G97 the chain is on the periplasmic side. Residues F98–F118 form a helical membrane-spanning segment. Residues F119–V635 lie on the Cytoplasmic side of the membrane. G191–T198 contacts ATP. H413 contributes to the Zn(2+) binding site. Residue E414 is part of the active site. Zn(2+) is bound by residues H417 and D491. Positions N593 to V635 are disordered. A compositionally biased stretch (polar residues) spans K607–D620.

In the central section; belongs to the AAA ATPase family. The protein in the C-terminal section; belongs to the peptidase M41 family. Homohexamer. Requires Zn(2+) as cofactor.

It localises to the cell inner membrane. In terms of biological role, acts as a processive, ATP-dependent zinc metallopeptidase for both cytoplasmic and membrane proteins. Plays a role in the quality control of integral membrane proteins. The protein is ATP-dependent zinc metalloprotease FtsH of Haemophilus influenzae (strain ATCC 51907 / DSM 11121 / KW20 / Rd).